The sequence spans 504 residues: Maturase K (504 aa).

The protein belongs to the intron maturase 2 family. MatK subfamily.

Its subcellular location is the plastid. The protein resides in the chloroplast. Its function is as follows. Usually encoded in the trnK tRNA gene intron. Probably assists in splicing its own and other chloroplast group II introns. The chain is Maturase K from Kokia drynarioides (Hawaiian tree cotton).